Consider the following 335-residue polypeptide: UPF0353 protein MAP_1207 (335 aa).

The next 2 helical transmembrane spans lie at 18 to 38 and 67 to 87; these read WFFL…LMQL and LPAI…AGPT. Residues 98–294 enclose the VWFA domain; sequence VVMLVIDVSQ…QELKSVYATL (197 aa). The helical transmembrane segment at 309–329 threads the bilayer; sequence VGWVRLGALVLALAALTALLI.

It belongs to the UPF0353 family.

The protein resides in the cell membrane. The sequence is that of UPF0353 protein MAP_1207 from Mycolicibacterium paratuberculosis (strain ATCC BAA-968 / K-10) (Mycobacterium paratuberculosis).